The following is a 303-amino-acid chain: Glutaminase (303 aa).

Positions 63, 113, 157, 164, 188, 239, and 257 each coordinate substrate.

It belongs to the glutaminase family. In terms of assembly, homotetramer.

The catalysed reaction is L-glutamine + H2O = L-glutamate + NH4(+). This chain is Glutaminase, found in Saccharopolyspora erythraea (strain ATCC 11635 / DSM 40517 / JCM 4748 / NBRC 13426 / NCIMB 8594 / NRRL 2338).